Reading from the N-terminus, the 174-residue chain is U1 small nuclear ribonucleoprotein C (174 aa).

A Matrin-type zinc finger spans residues 4–36 (YYCDYCDKYLTHDSPSVRKSHTVGKQHKLAVQL). 2 stretches are compositionally biased toward low complexity: residues 82–109 (QQQQQQQQQQGILPFQGMQPPPHQQQGM) and 122–140 (PHQFNNNNNPHQQHSFQPP). The tract at residues 82 to 174 (QQQQQQQQQQ…QHNQPTIPGL (93 aa)) is disordered. Basic residues predominate over residues 141–163 (HHQHHPHQQHQQHQQHQHQHQHQ). Residues 164-174 (QQHNQPTIPGL) show a composition bias toward low complexity.

This sequence belongs to the U1 small nuclear ribonucleoprotein C family. In terms of assembly, component of the U1 snRNP. The U1 snRNP is composed of the U1 snRNA and the 7 core Sm proteins SNRPB, SNRPD1, SNRPD2, SNRPD3, SNRPE, SNRPF and SNRPG that assemble in a heptameric protein ring on the Sm site of the small nuclear RNA to form the core snRNP, and at least 3 U1 snRNP-specific proteins SNRNP70/U1-70K, SNRPA/U1-A and SNRPC/U1-C. SNRPC/U1-C interacts with U1 snRNA and the 5' splice-site region of the pre-mRNA.

It is found in the nucleus. Functionally, component of the spliceosomal U1 snRNP, which is essential for recognition of the pre-mRNA 5' splice-site and the subsequent assembly of the spliceosome. SNRPC/U1-C is directly involved in initial 5' splice-site recognition for both constitutive and regulated alternative splicing. The interaction with the 5' splice-site seems to precede base-pairing between the pre-mRNA and the U1 snRNA. Stimulates commitment or early (E) complex formation by stabilizing the base pairing of the 5' end of the U1 snRNA and the 5' splice-site region. The polypeptide is U1 small nuclear ribonucleoprotein C (Dictyostelium discoideum (Social amoeba)).